Here is a 92-residue protein sequence, read N- to C-terminus: RQC P-site tRNA stabilizing factor (92 aa).

Residues 5–65 (MRLDKYLKVS…GPKIVTAKIE (61 aa)) form the S4 RNA-binding domain.

The protein belongs to the RqcP family. In terms of assembly, associates with stalled 50S ribosomal subunits. Binds to RqcH, 23S rRNA and the P-site tRNA. Does not require RqcH for association with 50S subunits.

Functionally, key component of the ribosome quality control system (RQC), a ribosome-associated complex that mediates the extraction of incompletely synthesized nascent chains from stalled ribosomes and their subsequent degradation. RqcH recruits Ala-charged tRNA, and with RqcP directs the elongation of stalled nascent chains on 50S ribosomal subunits, leading to non-templated C-terminal alanine extensions (Ala tail). The Ala tail promotes nascent chain degradation. RqcP is associated with the translocation-like movement of the peptidyl-tRNA from the A-site into the P-site. This Listeria innocua serovar 6a (strain ATCC BAA-680 / CLIP 11262) protein is RQC P-site tRNA stabilizing factor.